Consider the following 313-residue polypeptide: Apolipoprotein E (313 aa).

A signal peptide spans 1-18; that stretch reads MKVLWVALVITLLAGCQA. 8 consecutive repeat copies span residues 79–100, 101–122, 123–144, 145–166, 167–188, 189–209, 210–229, and 230–251. The 8 X 22 AA approximate tandem repeats stretch occupies residues 79 to 251; that stretch reads VLMDETMKEV…HLEEIREQLE (173 aa). An LDL and other lipoprotein receptors binding region spans residues 157–167; that stretch reads HLRKLRKRLLR. Heparin is bound at residue 161–164; sequence LRKR. Residues 209–286 are lipid-binding and lipoprotein association; that stretch reads AGTLASQTLR…SWFEPLVEDM (78 aa). 225 to 232 contributes to the heparin binding site; that stretch reads HQKLRGRV. The interval 262-313 is homooligomerization; that stretch reads SQIRLQAEAFQARLKSWFEPLVEDMQRQWAGLVEKVQLAMATSSTSAPSENH. Residues 274–286 are specificity for association with VLDL; that stretch reads RLKSWFEPLVEDM.

Belongs to the apolipoprotein A1/A4/E family. In terms of assembly, homotetramer. May interact with ABCA1; functionally associated with ABCA1 in the biogenesis of HDLs. May interact with APP/A4 amyloid-beta peptide; the interaction is extremely stable in vitro but its physiological significance is unclear. May interact with MAPT. May interact with MAP2. In the cerebrospinal fluid, interacts with secreted SORL1. Interacts with PMEL; this allows the loading of PMEL luminal fragment on ILVs to induce fibril nucleation. In terms of processing, APOE exists as multiple glycosylated and sialylated glycoforms within cells and in plasma. The extent of glycosylation and sialylation are tissue and context specific. Glycated in plasma VLDL. Post-translationally, phosphorylated by FAM20C in the extracellular medium.

It localises to the secreted. It is found in the extracellular space. Its subcellular location is the extracellular matrix. The protein resides in the extracellular vesicle. The protein localises to the endosome. It localises to the multivesicular body. APOE is an apolipoprotein, a protein associating with lipid particles, that mainly functions in lipoprotein-mediated lipid transport between organs via the plasma and interstitial fluids. APOE is a core component of plasma lipoproteins and is involved in their production, conversion and clearance. Apolipoproteins are amphipathic molecules that interact both with lipids of the lipoprotein particle core and the aqueous environment of the plasma. As such, APOE associates with chylomicrons, chylomicron remnants, very low density lipoproteins (VLDL) and intermediate density lipoproteins (IDL) but shows a preferential binding to high-density lipoproteins (HDL). It also binds a wide range of cellular receptors including the LDL receptor/LDLR and the very low-density lipoprotein receptor/VLDLR that mediate the cellular uptake of the APOE-containing lipoprotein particles. Finally, APOE also has a heparin-binding activity and binds heparan-sulfate proteoglycans on the surface of cells, a property that supports the capture and the receptor-mediated uptake of APOE-containing lipoproteins by cells. This chain is Apolipoprotein E (APOE), found in Balaenoptera acutorostrata scammoni (North Pacific minke whale).